The primary structure comprises 706 residues: Ribosomal RNA large subunit methyltransferase K/L (706 aa).

The region spanning 43–154 (LMYQSLLWSR…RDMASVALDL (112 aa)) is the THUMP domain.

The protein belongs to the methyltransferase superfamily. RlmKL family.

Its subcellular location is the cytoplasm. It carries out the reaction guanosine(2445) in 23S rRNA + S-adenosyl-L-methionine = N(2)-methylguanosine(2445) in 23S rRNA + S-adenosyl-L-homocysteine + H(+). The enzyme catalyses guanosine(2069) in 23S rRNA + S-adenosyl-L-methionine = N(2)-methylguanosine(2069) in 23S rRNA + S-adenosyl-L-homocysteine + H(+). In terms of biological role, specifically methylates the guanine in position 2445 (m2G2445) and the guanine in position 2069 (m7G2069) of 23S rRNA. The sequence is that of Ribosomal RNA large subunit methyltransferase K/L from Yersinia pestis (strain Pestoides F).